Consider the following 74-residue polypeptide: Small ribosomal subunit protein bS18 (74 aa).

Belongs to the bacterial ribosomal protein bS18 family. As to quaternary structure, part of the 30S ribosomal subunit. Forms a tight heterodimer with protein bS6.

Binds as a heterodimer with protein bS6 to the central domain of the 16S rRNA, where it helps stabilize the platform of the 30S subunit. The polypeptide is Small ribosomal subunit protein bS18 (Rhizorhabdus wittichii (strain DSM 6014 / CCUG 31198 / JCM 15750 / NBRC 105917 / EY 4224 / RW1) (Sphingomonas wittichii)).